Consider the following 225-residue polypeptide: tRNA (guanine-N(7)-)-methyltransferase (225 aa).

Residues Glu-56, Glu-81, Asp-108, and Asp-131 each coordinate S-adenosyl-L-methionine. Asp-131 is an active-site residue. Substrate-binding positions include Lys-135, Asp-167, and Thr-204 to Glu-207.

Belongs to the class I-like SAM-binding methyltransferase superfamily. TrmB family.

The enzyme catalyses guanosine(46) in tRNA + S-adenosyl-L-methionine = N(7)-methylguanosine(46) in tRNA + S-adenosyl-L-homocysteine. The protein operates within tRNA modification; N(7)-methylguanine-tRNA biosynthesis. Functionally, catalyzes the formation of N(7)-methylguanine at position 46 (m7G46) in tRNA. The protein is tRNA (guanine-N(7)-)-methyltransferase of Legionella pneumophila (strain Lens).